Reading from the N-terminus, the 116-residue chain is MKGFKSLVVMTLTLFLVFSFMGNCNSAPQRLFERRNWTPQAMLYLKGAQGRRFLSDQSRRKDLSDRPPLERRSPNSQQLTLPEAAAVLLAFLQKPQEAGDENLDQTRFLEDSLLNW.

The signal sequence occupies residues 1-26 (MKGFKSLVVMTLTLFLVFSFMGNCNS). A propeptide spanning residues 27 to 35 (APQRLFERR) is cleaved from the precursor. Residue Q49 is modified to Glutamine amide. Propeptides lie at residues 50–116 (GRRF…LLNW) and 74–116 (PNSQ…LLNW). Residues 53–73 (FLSDQSRRKDLSDRPPLERRS) are compositionally biased toward basic and acidic residues. A disordered region spans residues 53 to 80 (FLSDQSRRKDLSDRPPLERRSPNSQQLT).

The protein belongs to the spexin family.

The protein resides in the secreted. Its subcellular location is the extracellular space. It localises to the cytoplasmic vesicle. The protein localises to the secretory vesicle. In terms of biological role, plays a role as a central modulator of cardiovascular and renal function and nociception. Also plays a role in energy metabolism and storage. Inhibits adrenocortical cell proliferation with minor stimulation on corticosteroid release. Its function is as follows. Acts as a ligand for galanin receptors GALR2 and GALR3. Intracerebroventricular administration of the peptide induces an increase in arterial blood pressure, a decrease in both heart rate and renal excretion and delayed natriuresis. Intraventricular administration of the peptide induces antinociceptive activity. Also induces contraction of muscarinic-like stomach smooth muscles. Intraperitoneal administration of the peptide induces a reduction in food consumption and body weight. Inhibits long chain fatty acid uptake into adipocytes. Intracerebroventricular administration of the peptide induces a decrease in heart rate, but no change in arterial pressure, and an increase in urine flow rate. Intraventricular administration of the peptide induces antinociceptive activity. This chain is Spexin (SPX), found in Bos taurus (Bovine).